The primary structure comprises 202 residues: Large ribosomal subunit protein bL25 (202 aa).

This sequence belongs to the bacterial ribosomal protein bL25 family. CTC subfamily. Part of the 50S ribosomal subunit; part of the 5S rRNA/L5/L18/L25 subcomplex. Contacts the 5S rRNA. Binds to the 5S rRNA independently of L5 and L18.

Functionally, this is one of the proteins that binds to the 5S RNA in the ribosome where it forms part of the central protuberance. This chain is Large ribosomal subunit protein bL25, found in Nitrosomonas eutropha (strain DSM 101675 / C91 / Nm57).